The primary structure comprises 414 residues: Serpin A3-6 (414 aa).

The N-terminal stretch at 1 to 25 is a signal peptide; the sequence is MRTERVSPLLALGILVAGLCSRVHC. N-linked (GlcNAc...) asparagine glycosylation is found at asparagine 103, asparagine 183, asparagine 233, asparagine 267, and asparagine 321.

This sequence belongs to the serpin family. As to quaternary structure, homodimer.

The protein resides in the cytoplasmic vesicle. It localises to the secretory vesicle. It is found in the chromaffin granule. Its subcellular location is the secreted. Its function is as follows. Serine protease inhibitor. This Bos taurus (Bovine) protein is Serpin A3-6.